Here is a 256-residue protein sequence, read N- to C-terminus: Metallo-beta-lactamase type 2 (256 aa).

Positions 1–29 (MKNTLLKLGVCVSLLGITPFVSTISSVQA) are cleaved as a signal peptide. Zn(2+) contacts are provided by His115, His117, Asp119, His178, and Cys197. Substrate contacts are provided by Lys200 and Asn209. A Zn(2+)-binding site is contributed by His239.

It belongs to the metallo-beta-lactamase superfamily. Class-B beta-lactamase family. As to quaternary structure, monomer. Requires Zn(2+) as cofactor.

The protein localises to the periplasm. The enzyme catalyses a beta-lactam + H2O = a substituted beta-amino acid. Its activity is regulated as follows. Inhibited by chelating agents such as EDTA. Its function is as follows. Confers resistance to the different beta-lactams antibiotics (penicillin, cephalosporin and carbapenem) via the hydrolysis of the beta-lactam ring. Benzylpenicillin is a better substrate than cephalosporin C and ampicillin. The sequence is that of Metallo-beta-lactamase type 2 from Bacillus cereus.